The chain runs to 453 residues: Proton extrusion protein PxcA (453 aa).

Positions 147-189 (SQDKETQTLDNKSTNQTNSKLSNNNKISSGQNDSRLESASQKT) are disordered. Residues 154–163 (TLDNKSTNQT) show a composition bias toward polar residues. A compositionally biased stretch (low complexity) spans 164–175 (NSKLSNNNKISS). A compositionally biased stretch (polar residues) spans 176–189 (GQNDSRLESASQKT). Transmembrane regions (helical) follow at residues 235-255 (FILL…TFLL), 330-350 (SIGN…VIVS), 377-397 (LIIL…WEVI), and 413-433 (FNFL…KYWI).

Belongs to the CemA family.

It is found in the cell inner membrane. Required for H(+) efflux immediately after light irradiation to form a rapid H(+) concentration gradient across the thylakoid membranes. Together with PxcL, contributes to transient H(+) uptake following dark to light transition. The protein is Proton extrusion protein PxcA of Crocosphaera subtropica (strain ATCC 51142 / BH68) (Cyanothece sp. (strain ATCC 51142)).